The following is a 479-amino-acid chain: Poly(A) polymerase catalytic subunit (479 aa).

Residues Asp202 and Asp204 contribute to the active site. Ca(2+) contacts are provided by Asp202, Asp204, and Asp253.

Belongs to the poxviridae poly(A) polymerase catalytic subunit family. Heterodimer of a large (catalytic) subunit and a small (regulatory) subunit.

The catalysed reaction is RNA(n) + ATP = RNA(n)-3'-adenine ribonucleotide + diphosphate. Polymerase that creates the 3'-poly(A) tail of mRNA's. This is Poly(A) polymerase catalytic subunit (OPG063) from Mus musculus (Mouse).